The following is a 421-amino-acid chain: Alpha-tubulin N-acetyltransferase 1 (421 aa).

The N-acetyltransferase domain maps to 1 to 190 (MEFPFDVDAL…NNFVIFEGFF (190 aa)). An N6-acetyllysine; by autocatalysis modification is found at Lys-56. Acetyl-CoA is bound at residue 124–137 (FYIHESVQRHGHGR). Lys-146 is subject to N6-acetyllysine; by autocatalysis. 160-169 (SQKLLKFLNK) contributes to the acetyl-CoA binding site. The disordered stretch occupies residues 196-235 (PPAPSLRATRHSRAAAVDPTPAAPARKLPPKRAEGDIKPY). Residues 209–221 (AAAVDPTPAAPAR) show a composition bias toward low complexity. Over residues 226–235 (KRAEGDIKPY) the composition is skewed to basic and acidic residues. 2 positions are modified to N6-acetyllysine; by autocatalysis: Lys-233 and Lys-244. Residues 252 to 284 (PLNRAPRRATPPAHPPPRSSSLGNSPERGPLRP) are disordered. A phosphoserine mark is found at Ser-272 and Ser-276. Residue Arg-305 is modified to Asymmetric dimethylarginine. The disordered stretch occupies residues 306–402 (LLLAADPGGS…PAQSWTVGGD (97 aa)). Phosphoserine is present on Ser-315. Arg-323 bears the Omega-N-methylarginine mark. Positions 342 to 354 (VNSSSPNTGNQDS) are enriched in polar residues. The segment covering 355-367 (KQGEQETKNRSAS) has biased composition (basic and acidic residues).

This sequence belongs to the acetyltransferase ATAT1 family. In terms of assembly, component of the BBSome complex. Interacts with AP2 alpha-adaptins, including AP2A2, but not with AP1 gamma-adaptin (AP1G1/AP1G2); this interaction is required for efficient alpha-tubulin acetylation, hence clathrin-coated pits are sites of microtubule acetylation. Autoacetylation strongly increases tubulin acetylation.

The protein localises to the cytoplasm. It is found in the membrane. It localises to the clathrin-coated pit. Its subcellular location is the cell junction. The protein resides in the focal adhesion. The protein localises to the cell projection. It is found in the axon. It localises to the cytoskeleton. Its subcellular location is the spindle. It catalyses the reaction L-lysyl-[alpha-tubulin] + acetyl-CoA = N(6)-acetyl-L-lysyl-[alpha-tubulin] + CoA + H(+). Functionally, specifically acetylates 'Lys-40' in alpha-tubulin on the lumenal side of microtubules. Promotes microtubule destabilization and accelerates microtubule dynamics; this activity may be independent of acetylation activity. Acetylates alpha-tubulin with a slow enzymatic rate, due to a catalytic site that is not optimized for acetyl transfer. Enters the microtubule through each end and diffuses quickly throughout the lumen of microtubules. Acetylates only long/old microtubules because of its slow acetylation rate since it does not have time to act on dynamically unstable microtubules before the enzyme is released. Required for normal sperm flagellar function. Promotes directional cell locomotion and chemotaxis, through AP2A2-dependent acetylation of alpha-tubulin at clathrin-coated pits that are concentrated at the leading edge of migrating cells. May facilitate primary cilium assembly. The sequence is that of Alpha-tubulin N-acetyltransferase 1 from Homo sapiens (Human).